A 293-amino-acid chain; its full sequence is 1D-myo-inositol 2-acetamido-2-deoxy-alpha-D-glucopyranoside deacetylase (293 aa).

Zn(2+) contacts are provided by His-16, Asp-19, and His-156.

Belongs to the MshB deacetylase family. It depends on Zn(2+) as a cofactor.

The enzyme catalyses 1D-myo-inositol 2-acetamido-2-deoxy-alpha-D-glucopyranoside + H2O = 1D-myo-inositol 2-amino-2-deoxy-alpha-D-glucopyranoside + acetate. Its function is as follows. Catalyzes the deacetylation of 1D-myo-inositol 2-acetamido-2-deoxy-alpha-D-glucopyranoside (GlcNAc-Ins) in the mycothiol biosynthesis pathway. This chain is 1D-myo-inositol 2-acetamido-2-deoxy-alpha-D-glucopyranoside deacetylase, found in Nakamurella multipartita (strain ATCC 700099 / DSM 44233 / CIP 104796 / JCM 9543 / NBRC 105858 / Y-104) (Microsphaera multipartita).